Consider the following 322-residue polypeptide: Large ribosomal subunit protein uL29m (322 aa).

A disordered region spans residues 1-44; it reads MLNVQRGLHTTVRLSARTKYTKPKPKPQARVIKSEPSQVTHHDN.

This sequence belongs to the universal ribosomal protein uL29 family. As to quaternary structure, component of the mitochondrial large ribosomal subunit. Mature mitochondrial ribosomes consist of a small (37S) and a large (54S) subunit. The 37S subunit contains at least 33 different proteins and 1 molecule of RNA (15S). The 54S subunit contains at least 45 different proteins and 1 molecule of RNA (21S).

The protein resides in the mitochondrion. The chain is Large ribosomal subunit protein uL29m (MRPL4) from Vanderwaltozyma polyspora (strain ATCC 22028 / DSM 70294 / BCRC 21397 / CBS 2163 / NBRC 10782 / NRRL Y-8283 / UCD 57-17) (Kluyveromyces polysporus).